The primary structure comprises 147 residues: MVHLTGEEKAAVTALWGKVNVXEVGGEALGRLLVVYPWTQRFFESFGDLSSPDAVMSNXKVKAHGKKVLGAFSDGLAHLDNLKSTFAQLSELHCDKLHVDPENFRLLGNVLVCVLAHHFGKEFTPQVQAAYQKVVAGVANALAHKYH.

Val2 carries the N-acetylvaline modification. Positions 3 to 147 (HLTGEEKAAV…VANALAHKYH (145 aa)) constitute a Globin domain. Phosphothreonine is present on Thr13. At Ser45 the chain carries Phosphoserine. Lys60 bears the N6-acetyllysine mark. Position 64 (His64) interacts with heme b. Residue Lys83 is modified to N6-acetyllysine. Position 93 (His93) interacts with heme b. Cys94 carries the S-nitrosocysteine modification. An N6-acetyllysine modification is found at Lys145.

Belongs to the globin family. As to quaternary structure, heterotetramer of two alpha chains and two beta chains. Red blood cells.

Its function is as follows. Involved in oxygen transport from the lung to the various peripheral tissues. The sequence is that of Hemoglobin subunit beta (HBB) from Cheracebus torquatus (Collared titi monkey).